We begin with the raw amino-acid sequence, 664 residues long: DNA ligase (664 aa).

NAD(+) is bound by residues 30-34, 79-80, and E109; these read DFEFD and SL. Residue K111 is the N6-AMP-lysine intermediate of the active site. Residues R132, E169, K284, and K308 each contribute to the NAD(+) site. Residues C403, C406, C421, and C427 each coordinate Zn(2+). The BRCT domain occupies 586–664; it reads NRSEKLKGLT…NEDAFLNMLE (79 aa).

This sequence belongs to the NAD-dependent DNA ligase family. LigA subfamily. Requires Mg(2+) as cofactor. Mn(2+) serves as cofactor.

It catalyses the reaction NAD(+) + (deoxyribonucleotide)n-3'-hydroxyl + 5'-phospho-(deoxyribonucleotide)m = (deoxyribonucleotide)n+m + AMP + beta-nicotinamide D-nucleotide.. Its function is as follows. DNA ligase that catalyzes the formation of phosphodiester linkages between 5'-phosphoryl and 3'-hydroxyl groups in double-stranded DNA using NAD as a coenzyme and as the energy source for the reaction. It is essential for DNA replication and repair of damaged DNA. The polypeptide is DNA ligase (Parabacteroides distasonis (strain ATCC 8503 / DSM 20701 / CIP 104284 / JCM 5825 / NCTC 11152)).